Here is a 135-residue protein sequence, read N- to C-terminus: Large ribosomal subunit protein eL32 (135 aa).

The interval Gly-51–Val-77 is disordered.

The protein belongs to the eukaryotic ribosomal protein eL32 family.

The sequence is that of Large ribosomal subunit protein eL32 (rpl32e) from Nanoarchaeum equitans (strain Kin4-M).